The sequence spans 210 residues: Probable glutathione S-transferase gst-36 (210 aa).

Residues 2-79 (PHFKFYYFDV…YLGHQFHRAG (78 aa)) enclose the GST N-terminal domain. Glutathione contacts are provided by residues Tyr-8, Trp-39, Lys-43, 49-51 (GQV), and 63-64 (QT). Positions 81–210 (NAVDCARLDM…YVSQRKATPA (130 aa)) constitute a GST C-terminal domain.

Belongs to the GST superfamily. Sigma family.

The enzyme catalyses RX + glutathione = an S-substituted glutathione + a halide anion + H(+). Conjugation of reduced glutathione to a wide number of exogenous and endogenous hydrophobic electrophiles. This chain is Probable glutathione S-transferase gst-36 (gst-36), found in Caenorhabditis elegans.